We begin with the raw amino-acid sequence, 226 residues long: Small ribosomal subunit protein uS2c (226 aa).

The protein belongs to the universal ribosomal protein uS2 family.

The protein resides in the plastid. It is found in the chloroplast. This Phaeodactylum tricornutum (strain CCAP 1055/1) protein is Small ribosomal subunit protein uS2c (rps2).